The chain runs to 252 residues: MVIKCAFKECRPYLNELETRFGLAHWADQSSGFSLHYDDTGLSLYKTDEPKLGAISVDFVTGAAAHRRKFGGGKGQAIAKAVGLNKGATPIVLDATAGLGRDGFVLASLGCKVILHERHPVVAALLYDGLQRAYNDIEIGPWMQQNMSLIFGSSHTLLAQCESMPDVVYLDPMFPHREKSALVKKEMRVFQDLVGADTDADDLLEFAYPLASKRVVVKRPDYAPFLNDKTPSMQIKTKKNRFDVYVKAAMKK.

S-adenosyl-L-methionine contacts are provided by residues 101-102 (RD), 117-118 (ER), 153-154 (SS), and Asp171.

This sequence belongs to the methyltransferase superfamily. RsmJ family.

It is found in the cytoplasm. It catalyses the reaction guanosine(1516) in 16S rRNA + S-adenosyl-L-methionine = N(2)-methylguanosine(1516) in 16S rRNA + S-adenosyl-L-homocysteine + H(+). Its function is as follows. Specifically methylates the guanosine in position 1516 of 16S rRNA. The protein is Ribosomal RNA small subunit methyltransferase J of Pseudoalteromonas translucida (strain TAC 125).